Consider the following 219-residue polypeptide: UPF0619 GPI-anchored membrane protein AFUA_3G00880 (219 aa).

An N-terminal signal peptide occupies residues 1–16; sequence MRFALTLTAFVGSVAA. N-linked (GlcNAc...) asparagine glycosylation is present at Asn-85. Disordered stretches follow at residues 107–144 and 160–205; these read SQQFKVESSGSSTTSDSTSSASATGSASTSSSSTGTVS and SSTL…SLTV. The span at 114 to 144 shows a compositional bias: low complexity; sequence SSGSSTTSDSTSSASATGSASTSSSSTGTVS. Asn-198 is lipidated: GPI-like-anchor amidated asparagine. The propeptide at 199–219 is removed in mature form; sequence GAGSLTVPAGSLLLGLVALAL.

Belongs to the UPF0619 family. In terms of processing, the GPI-like anchor contains a phosphoceramide lipid group. The anchor position has not been determined.

Its subcellular location is the cell membrane. The polypeptide is UPF0619 GPI-anchored membrane protein AFUA_3G00880 (Aspergillus fumigatus (strain ATCC MYA-4609 / CBS 101355 / FGSC A1100 / Af293) (Neosartorya fumigata)).